The following is a 469-amino-acid chain: Cell division protein FtsP (469 aa).

The tat-type signal signal peptide spans 1 to 27; it reads MKLSRRQFLQRSTLAGVATVTPTSLWA.

The protein belongs to the FtsP family. In terms of processing, predicted to be exported by the Tat system. The position of the signal peptide cleavage has not been experimentally proven.

The protein resides in the periplasm. Cell division protein that is required for growth during stress conditions. May be involved in protecting or stabilizing the divisomal assembly under conditions of stress. This is Cell division protein FtsP from Glaesserella parasuis serovar 5 (strain SH0165) (Haemophilus parasuis).